The chain runs to 123 residues: MKTLARILVVFTLIVGLIGFFNPLPAQAALNAVDAKLTTEFGQKIDLNNSHIREFRDLRGFYPNLASKIIKNAPYDKVEDVLNIPGLSERQQERLQANLDKFTVTEPSKELIEGDDRINPGVY.

The signal sequence occupies residues 1–28 (MKTLARILVVFTLIVGLIGFFNPLPAQA).

Belongs to the PsbU family. In terms of assembly, PSII is composed of 1 copy each of membrane proteins PsbA, PsbB, PsbC, PsbD, PsbE, PsbF, PsbH, PsbI, PsbJ, PsbK, PsbL, PsbM, PsbT, PsbX, PsbY, PsbZ, Psb30/Ycf12, peripheral proteins PsbO, CyanoQ (PsbQ), PsbU, PsbV and a large number of cofactors. It forms dimeric complexes.

It localises to the cellular thylakoid membrane. One of the extrinsic, lumenal subunits of photosystem II (PSII). PSII is a light-driven water plastoquinone oxidoreductase, using light energy to abstract electrons from H(2)O, generating a proton gradient subsequently used for ATP formation. The extrinsic proteins stabilize the structure of photosystem II oxygen-evolving complex (OEC), the ion environment of oxygen evolution and protect the OEC against heat-induced inactivation. This chain is Photosystem II extrinsic protein U, found in Gloeothece citriformis (strain PCC 7424) (Cyanothece sp. (strain PCC 7424)).